The sequence spans 536 residues: Formate--tetrahydrofolate ligase (536 aa).

51–58 contributes to the ATP binding site; it reads TPAGEGKT.

Belongs to the formate--tetrahydrofolate ligase family.

It catalyses the reaction (6S)-5,6,7,8-tetrahydrofolate + formate + ATP = (6R)-10-formyltetrahydrofolate + ADP + phosphate. Its pathway is one-carbon metabolism; tetrahydrofolate interconversion. This Thermoplasma acidophilum (strain ATCC 25905 / DSM 1728 / JCM 9062 / NBRC 15155 / AMRC-C165) protein is Formate--tetrahydrofolate ligase.